Reading from the N-terminus, the 190-residue chain is Coat protein (190 aa).

This sequence belongs to the potexvirus capsid protein family.

The protein localises to the virion. In terms of biological role, required for genome encapsidation. Forms ribonucleoprotein complexes along with TGB1 helicase and viral RNA. This is Coat protein from White clover mosaic virus (strain M) (WCMV).